The sequence spans 126 residues: Large ribosomal subunit protein bL17 (126 aa).

It belongs to the bacterial ribosomal protein bL17 family. Part of the 50S ribosomal subunit. Contacts protein L32.

The protein is Large ribosomal subunit protein bL17 of Vibrio atlanticus (strain LGP32) (Vibrio splendidus (strain Mel32)).